The primary structure comprises 146 residues: Hemoglobin subunit beta-2 (146 aa).

Residues 2–146 enclose the Globin domain; it reads HWSAEEKQLI…VAHALARRYH (145 aa). 2 residues coordinate heme b: His-63 and His-92.

The protein belongs to the globin family. As to quaternary structure, heterotetramer of two alpha chains and two beta chains. As to expression, red blood cells.

Its function is as follows. Involved in oxygen transport from the lung to the various peripheral tissues. This chain is Hemoglobin subunit beta-2 (HBB2), found in Naja naja (Indian cobra).